The following is a 943-amino-acid chain: Centromere protein C (943 aa).

K45 participates in a covalent cross-link: Glycyl lysine isopeptide (Lys-Gly) (interchain with G-Cter in SUMO2). Positions 70-91 (CIQSPSKECQKSHPKSVPVSSK) are disordered. Phosphoserine occurs at positions 73 and 96. K119 is covalently cross-linked (Glycyl lysine isopeptide (Lys-Gly) (interchain with G-Cter in SUMO2)). T130 bears the Phosphothreonine mark. K134 participates in a covalent cross-link: Glycyl lysine isopeptide (Lys-Gly) (interchain with G-Cter in SUMO2). Position 146 is a phosphoserine (S146). K180 is covalently cross-linked (Glycyl lysine isopeptide (Lys-Gly) (interchain with G-Cter in SUMO2)). Residue T183 is modified to Phosphothreonine. S189 carries the post-translational modification Phosphoserine. Glycyl lysine isopeptide (Lys-Gly) (interchain with G-Cter in SUMO2) cross-links involve residues K212 and K217. Basic and acidic residues predominate over residues 224–239 (VSDEEDKTSEGQERKP). Residues 224–250 (VSDEEDKTSEGQERKPSGSSQNRIRDS) are disordered. At S225 the chain carries Phosphoserine. Glycyl lysine isopeptide (Lys-Gly) (interchain with G-Cter in SUMO2) cross-links involve residues K238 and K260. The Nuclear localization signal signature appears at 259 to 273 (KKSFSTLFLETVKRK). A Phosphoserine modification is found at S261. Residues K271, K273, and K297 each participate in a glycyl lysine isopeptide (Lys-Gly) (interchain with G-Cter in SUMO2) cross-link. Phosphoserine is present on residues S316, S333, S376, and S397. The tract at residues 358 to 377 (LANDKHSHKPHPVETSQPSD) is disordered. The tract at residues 403–513 (YSKNAEKPSR…SKNKLVPEEV (111 aa)) is disordered. The segment covering 412-426 (RSKRTIKQKQRRKFM) has biased composition (basic residues). Composition is skewed to basic and acidic residues over residues 438 to 463 (QSKDENIHTSHITQDEFQRNSDRNME) and 488 to 510 (TRKDKEESKKKRFSSESKNKLVP). Position 439 is a phosphoserine (S439). K440 is covalently cross-linked (Glycyl lysine isopeptide (Lys-Gly) (interchain with G-Cter in SUMO2)). Residues 484-499 (KKSSTRKDKEESKKKR) carry the Nuclear localization signal motif. A Phosphoserine modification is found at S528. A Glycyl lysine isopeptide (Lys-Gly) (interchain with G-Cter in SUMO2) cross-link involves residue K534. Disordered stretches follow at residues 537–587 (ESPV…ATKG) and 632–717 (DCSR…KQSK). At S538 the chain carries Phosphoserine. The Nuclear localization signal signature appears at 558–574 (RKSTKKTNQSSKNIRKK). Residues 570–583 (NIRKKTIPLKRQKT) show a composition bias toward basic residues. Polar residues predominate over residues 633–672 (CSRSTRSSKNEDNIMTAQNVPLKPQTSGYTCNIPTESNLD). Residue K677 forms a Glycyl lysine isopeptide (Lys-Gly) (interchain with G-Cter in SUMO2) linkage. 3 positions are modified to phosphoserine: S684, S709, and S710. Residues 706 to 715 (VHGSSDDSKQ) are compositionally biased toward basic and acidic residues. K727 is covalently cross-linked (Glycyl lysine isopeptide (Lys-Gly) (interchain with G-Cter in SUMO2)). A Phosphothreonine modification is found at T734. Residues 737–759 (VRRTKRTRLKPLEYWRGERIDYQ) are MIF2 homology domain II. Phosphoserine occurs at positions 763 and 773. The Nuclear localization signal motif lies at 780–798 (KRKAKENIGKVNKKSNKKR). A Glycyl lysine isopeptide (Lys-Gly) (interchain with G-Cter in SUMO2) cross-link involves residue K807. Residues 890–943 (LVFYVNFGDLLCTLHETPYILSTGDSFYVPSGNYYNIKNLRNEESVLLFTQIKR) are MIF2 homology domain III.

It belongs to the CENP-C/MIF2 family. In terms of assembly, oligomer. Component of the CENPA-NAC complex, at least composed of CENPA, CENPC, CENPH, CENPM, CENPN, CENPT and CENPU. The CENPA-NAC complex interacts with the CENPA-CAD complex, composed of CENPI, CENPK, CENPL, CENPO, CENPP, CENPQ, CENPR and CENPS. Binds to DAXX. Interacts with DNMT3B. Interacts directly with CENPA. Identified in a centromere complex containing histones H2A, H2B and H4, and at least CENPA, CENPB, CENPC, CENPT, CENPN, HJURP, SUPT16H, SSRP1 and RSF1. Interacts with MEIKIN.

The protein resides in the nucleus. Its subcellular location is the chromosome. It is found in the centromere. It localises to the kinetochore. In terms of biological role, component of the CENPA-NAC (nucleosome-associated) complex, a complex that plays a central role in assembly of kinetochore proteins, mitotic progression and chromosome segregation. The CENPA-NAC complex recruits the CENPA-CAD (nucleosome distal) complex and may be involved in incorporation of newly synthesized CENPA into centromeres. CENPC recruits DNA methylation and DNMT3B to both centromeric and pericentromeric satellite repeats and regulates the histone code in these regions. This Homo sapiens (Human) protein is Centromere protein C (CENPC).